The chain runs to 557 residues: Eudesmanediol synthase (557 aa).

Positions 310 and 314 each coordinate Mg(2+). Substrate-binding residues include D310, D314, and R450. Residues 310–314 (DDTFD) carry the DDXXD motif motif. Residues N453 and S457 each coordinate Mg(2+).

It belongs to the terpene synthase family. In terms of assembly, monomer. Mg(2+) serves as cofactor. Mn(2+) is required as a cofactor.

The protein localises to the cytoplasm. It carries out the reaction (2E,6E)-farnesyl diphosphate + 2 H2O = 7-epi-ent-eudesmane-5,11-diol + diphosphate. The protein operates within secondary metabolite biosynthesis; terpenoid biosynthesis. Its function is as follows. Component of the volatile terpenes biosynthesis pathways. Dihydroxylated sesquiterpenoid synthase that generates dually hydroxylated products directly from (E,E)-farnesyl diphosphate, primarily eudesmane-2,11-diol, along with two closely related structural isomers. The protein is Eudesmanediol synthase of Zea mays (Maize).